The chain runs to 416 residues: 2-amino-3-ketobutyrate coenzyme A ligase, mitochondrial (416 aa).

A mitochondrion-targeting transit peptide spans 1–18; the sequence is MWASFMWHGALSPGRRAH. The residue at position 42 (lysine 42) is an N6-acetyllysine; alternate. Lysine 42 is subject to N6-succinyllysine; alternate. A pyridoxal 5'-phosphate-binding site is contributed by 131–132; that stretch reads CF. Histidine 156 contacts substrate. The residue at position 184 (lysine 184) is an N6-acetyllysine; alternate. N6-succinyllysine; alternate is present on lysine 184. Residues serine 203, 259–262, and 292–293 contribute to the pyridoxal 5'-phosphate site; these read TLGK and SN. Position 262 is an N6-(pyridoxal phosphate)lysine (lysine 262). Residues lysine 323 and lysine 365 each carry the N6-succinyllysine modification. At lysine 380 the chain carries N6-acetyllysine; alternate. At lysine 380 the chain carries N6-succinyllysine; alternate. A substrate-binding site is contributed by arginine 386.

The protein belongs to the class-II pyridoxal-phosphate-dependent aminotransferase family. It depends on pyridoxal 5'-phosphate as a cofactor.

It is found in the mitochondrion. It localises to the nucleus. It catalyses the reaction glycine + acetyl-CoA = (2S)-2-amino-3-oxobutanoate + CoA. Its pathway is amino-acid degradation; L-threonine degradation via oxydo-reductase pathway; glycine from L-threonine: step 2/2. Pyridoxal phosphate (PLP) dependent enzyme, which catalyzes the cleavage of 2-amino-3-oxobutanoate to glycine and acetyl-CoA. Catalyzes the second reaction step on the main metabolic degradation pathway for L-threonine. The protein is 2-amino-3-ketobutyrate coenzyme A ligase, mitochondrial (Gcat) of Mus musculus (Mouse).